Reading from the N-terminus, the 440-residue chain is Probable exopolygalacturonase C (440 aa).

A signal peptide spans 1 to 21; the sequence is MLITNPALLGILASLVPLALG. N-linked (GlcNAc...) asparagine glycosylation is found at Asn-84 and Asn-151. PbH1 repeat units lie at residues 188-210, 217-238, and 240-261; these read GDDITVSHAIVDATSTGGFPFNT, GTNISITDSVMFNGDDAIAVNT, and SHNIVFARNTIGYQSHGMSIGS. N-linked (GlcNAc...) asparagine glycosylation is present at Asn-219. Asp-231 (proton donor) is an active-site residue. The active site involves His-255. N-linked (GlcNAc...) asparagine glycosylation occurs at Asn-271. A PbH1 4 repeat occupies 272 to 293; it reads ITNLRFEDVTVIDALYAARFKS. N-linked (GlcNAc...) asparagine glycosylation is present at Asn-313. Cys-389 and Cys-395 are joined by a disulfide. Asn-434 is a glycosylation site (N-linked (GlcNAc...) asparagine).

Belongs to the glycosyl hydrolase 28 family.

It localises to the secreted. It carries out the reaction [(1-&gt;4)-alpha-D-galacturonosyl](n) + H2O = alpha-D-galacturonate + [(1-&gt;4)-alpha-D-galacturonosyl](n-1). Its function is as follows. Specific in hydrolyzing the terminal glycosidic bond of polygalacturonic acid and oligogalacturonates. The polypeptide is Probable exopolygalacturonase C (pgxC) (Aspergillus fumigatus (strain CBS 144.89 / FGSC A1163 / CEA10) (Neosartorya fumigata)).